The chain runs to 296 residues: CDP-diacylglycerol--glycerol-3-phosphate 3-phosphatidyltransferase 1, chloroplastic/mitochondrial (296 aa).

A chloroplast and mitochondrion-targeting transit peptide spans 1–39; the sequence is MLRSGLASLIVDVNLRRTLRPSPTFSFPAHLSRCIITSR. Residues 62 to 82 are compositionally biased toward low complexity; it reads FSSSSSSEQSRPTSSSRNSFS. Residues 62–103 are disordered; that stretch reads FSSSSSSEQSRPTSSSRNSFSGHGQLDSDDNSSPPPSQSSSK. 5 helical membrane passes run 104–124, 126–146, 164–184, 189–209, and 261–281; these read VLTLPTVLTLGRVAAVPLLVA, FYVDSWWGTTATTSIFIAAAI, FGAFLDPVADKLMVAATLILL, IQVAELGPLPWLLTVPSIAII, and VGWLVASGAGLLYVSAGLSVW.

The protein belongs to the CDP-alcohol phosphatidyltransferase class-I family. Mn(2+) serves as cofactor.

It is found in the plastid. The protein localises to the chloroplast membrane. Its subcellular location is the mitochondrion membrane. The catalysed reaction is a CDP-1,2-diacyl-sn-glycerol + sn-glycerol 3-phosphate = a 1,2-diacyl-sn-glycero-3-phospho-(1'-sn-glycero-3'-phosphate) + CMP + H(+). It participates in phospholipid metabolism; phosphatidylglycerol biosynthesis; phosphatidylglycerol from CDP-diacylglycerol: step 1/2. Catalyzes the committed step to the synthesis of the acidic phospholipids, including phosphatidylglycerol (PG). Transfers specifically a phosphatidyl group from CDP-diacylglycerol to glycerol-3-phosphate to form phosphatidylglycerophosphate. Cannot catalyze the phosphatidyl group transfer to inositol, serine, choline or phosphatidylglycerol. Possesses high activity with CDP-dipalmitoylglycerol and low activity with CDP-dioleoylglycerol. Essential for chloroplast differentiation and PG accumulation in thylakoids, an essential process for the assembly of antenna-reaction center complexes to optimize energy transfer from antenna pigments, and for subsequent photochemical efficiency of photosystem II (PSII). During cold acclimation (at 5 degrees Celsius), necessary for the photosystem I (PSI) photochemistry, including both reaction center and light-harvesting integrity. But dispensable in mitochondrion, being redundant with PGPS2 for the production of PG and its derivative cardiolipin (CL) in mitochondrial membranes. Together with PGPS2, required for the proper embryo development by providing PG accurate levels. The chain is CDP-diacylglycerol--glycerol-3-phosphate 3-phosphatidyltransferase 1, chloroplastic/mitochondrial from Arabidopsis thaliana (Mouse-ear cress).